A 252-amino-acid chain; its full sequence is MAQLCELRRGRALLALVASLLLSGAQVASRELDVHESCGVSKVVGKCRASIPRWWYNITDGSCQPFVYGGCEGNGNNYQSKEECLDKCAGVTENTTDDMARNRNGADSSVLSVPRKQSAEDLSAEIFNYEEYCVPKAVTGPCRAAFPRWYYDTEKNSCISFIYGGCRGNKNSYLSQEACMQHCSGKQMHPFLTPGLKAVILVGLFLMVLILLLGTSMVCLIRVVRRKQERALRTVWSTADDKEQLVKNTCVL.

The N-terminal stretch at 1–27 (MAQLCELRRGRALLALVASLLLSGAQV) is a signal peptide. Over 28–197 (ASRELDVHES…MHPFLTPGLK (170 aa)) the chain is Extracellular. Positions 38 to 88 (CGVSKVVGKCRASIPRWWYNITDGSCQPFVYGGCEGNGNNYQSKEECLDKC) constitute a BPTI/Kunitz inhibitor 1 domain. Disulfide bonds link C38–C88, C47–C71, and C63–C84. A glycan (N-linked (GlcNAc...) asparagine) is linked at N57. N94 carries an N-linked (GlcNAc...) asparagine glycan. The region spanning 133–183 (CVPKAVTGPCRAAFPRWYYDTEKNSCISFIYGGCRGNKNSYLSQEACMQHC) is the BPTI/Kunitz inhibitor 2 domain. 3 disulfide bridges follow: C133–C183, C142–C166, and C158–C179. A helical transmembrane segment spans residues 198 to 218 (AVILVGLFLMVLILLLGTSMV). Residues 219-252 (CLIRVVRRKQERALRTVWSTADDKEQLVKNTCVL) lie on the Cytoplasmic side of the membrane.

In terms of assembly, interacts with TMPRSS13; the interaction promotes the phosphorylation and cell membrane localization of TMPRSS13. In terms of tissue distribution, isoform 2 is more predominantly expressed than isoform 1.

The protein resides in the cell membrane. Its subcellular location is the cytoplasm. Inhibitor of HGFAC. Also inhibits plasmin, and plasma and tissue kallikrein. Inhibits serine protease activity of TMPRSS13. Inhibits serine protease activity of ST14/matriptase in vitro. This Mus musculus (Mouse) protein is Kunitz-type protease inhibitor 2 (Spint2).